A 305-amino-acid polypeptide reads, in one-letter code: tRNA dimethylallyltransferase (305 aa).

ATP is bound at residue 11-18 (GPTAVGKT). 13-18 (TAVGKT) provides a ligand contact to substrate. The interaction with substrate tRNA stretch occupies residues 36-39 (DSMQ).

It belongs to the IPP transferase family. Monomer. Requires Mg(2+) as cofactor.

The catalysed reaction is adenosine(37) in tRNA + dimethylallyl diphosphate = N(6)-dimethylallyladenosine(37) in tRNA + diphosphate. Its function is as follows. Catalyzes the transfer of a dimethylallyl group onto the adenine at position 37 in tRNAs that read codons beginning with uridine, leading to the formation of N6-(dimethylallyl)adenosine (i(6)A). In Listeria monocytogenes serotype 4a (strain HCC23), this protein is tRNA dimethylallyltransferase.